The following is a 140-amino-acid chain: Cystatin-like 1 (140 aa).

The N-terminal stretch at Met1–Ala23 is a signal peptide. The region spanning Gly32 to Trp126 is the Cystatin domain. Asn45 is a glycosylation site (N-linked (GlcNAc...) asparagine). 2 cysteine pairs are disulfide-bonded: Cys94/Cys104 and Cys117/Cys137.

It belongs to the cystatin family. Highly expressed in testis where it localizes to spermatogonium, spermatocyes and round spermatids. Not detected in spermatozoa. Also detected in epididymis, cerebrum and pituitary.

It is found in the secreted. In Mus musculus (Mouse), this protein is Cystatin-like 1.